We begin with the raw amino-acid sequence, 299 residues long: Coenzyme PQQ synthesis protein B (299 aa).

It belongs to the PqqB family.

The protein operates within cofactor biosynthesis; pyrroloquinoline quinone biosynthesis. Its function is as follows. May be involved in the transport of PQQ or its precursor to the periplasm. The polypeptide is Coenzyme PQQ synthesis protein B (Xanthomonas axonopodis pv. citri (strain 306)).